We begin with the raw amino-acid sequence, 380 residues long: MAPNLRKSHPLLKTINNSLIDLPTPSNISAWWNFGSLLGICLATQILTGLLLAAHYTADTTLAFSSVAHTCRNVQYGWLIRNLHANGASFFFICIYLHIGRGLYYGSYLYKETWNTGIILLLTLMATAFVGYVLPWGQMSFWGATVITNLFSAIPYIGQTLVEWAWGGFSVDNPTLTRFFTLHFLLPFMIAGLTLIHLTFLHESGSNNPLGIVANSDKIPFHPYYSTKDILGFILLLLPLTALALFSPNLLGDPENFTPANPLVTPPHIKPEWYFLFAYAILRSIPNKLGGVLALAASVLILFLIPLLHKSKQRTMTFRPLSQLLFWTLVANLTILTWIGSQPVEHPFIIIGQLASLTYFTILLILFPLIGTLENKMLNH.

Helical transmembrane passes span 34-54 (FGSL…LLAA), 78-99 (WLIR…YLHI), 114-134 (WNTG…GYVL), and 179-199 (FFTL…IHLT). Residues His84 and His98 each coordinate heme b. Residues His183 and His197 each coordinate heme b. Residue His202 coordinates a ubiquinone. Transmembrane regions (helical) follow at residues 227–247 (TKDI…ALFS), 289–309 (LGGV…PLLH), 321–341 (LSQL…WIGS), and 348–368 (FIII…ILFP).

This sequence belongs to the cytochrome b family. The cytochrome bc1 complex contains 11 subunits: 3 respiratory subunits (MT-CYB, CYC1 and UQCRFS1), 2 core proteins (UQCRC1 and UQCRC2) and 6 low-molecular weight proteins (UQCRH/QCR6, UQCRB/QCR7, UQCRQ/QCR8, UQCR10/QCR9, UQCR11/QCR10 and a cleavage product of UQCRFS1). This cytochrome bc1 complex then forms a dimer. It depends on heme b as a cofactor.

It localises to the mitochondrion inner membrane. Its function is as follows. Component of the ubiquinol-cytochrome c reductase complex (complex III or cytochrome b-c1 complex) that is part of the mitochondrial respiratory chain. The b-c1 complex mediates electron transfer from ubiquinol to cytochrome c. Contributes to the generation of a proton gradient across the mitochondrial membrane that is then used for ATP synthesis. The sequence is that of Cytochrome b (MT-CYB) from Eudyptes chrysolophus (Macaroni penguin).